The chain runs to 215 residues: MLDREGFRPNVGIILLNARNEVFWGKRLREHSWQFPQGGIKYGETPMQAMYRELHEETGLHPEHVKIIGRTRDWLRYEVPDKFIKREVRGHYRGQKQIWFLLRMVGRDCDICLRATDHPEFDAWRWNEYWVPLDAVIEFKRDVYQLALTELSRFLRRPAQRAEKPRGPRPLRYPRIGGAPAQQTLTIVDTSVVCSEIEVEARTLDEMPPRVIIGK.

Residues 6 to 149 (GFRPNVGIIL…KRDVYQLALT (144 aa)) enclose the Nudix hydrolase domain. Residues 38 to 59 (GGIKYGETPMQAMYRELHEETG) carry the Nudix box motif.

It belongs to the Nudix hydrolase family. RppH subfamily. A divalent metal cation serves as cofactor.

Its function is as follows. Accelerates the degradation of transcripts by removing pyrophosphate from the 5'-end of triphosphorylated RNA, leading to a more labile monophosphorylated state that can stimulate subsequent ribonuclease cleavage. The chain is RNA pyrophosphohydrolase from Burkholderia vietnamiensis (strain G4 / LMG 22486) (Burkholderia cepacia (strain R1808)).